A 154-amino-acid chain; its full sequence is Probable prefoldin subunit 5 (154 aa).

Belongs to the prefoldin subunit alpha family. As to quaternary structure, heterohexamer of two PFD-alpha type and four PFD-beta type subunits. Interacts with byr1.

The protein localises to the cytoplasm. Functionally, binds specifically to cytosolic chaperonin (c-CPN) and transfers target proteins to it. Binds to nascent polypeptide chain and promotes folding in an environment in which there are many competing pathways for nonnative proteins. Required for normal cytoskeletal function and when bound to byr1, is involved in the regulation of sexual differentiation. This is Probable prefoldin subunit 5 (bob1) from Schizosaccharomyces pombe (strain 972 / ATCC 24843) (Fission yeast).